The following is a 122-amino-acid chain: Large ribosomal subunit protein uL14 (122 aa).

Belongs to the universal ribosomal protein uL14 family. In terms of assembly, part of the 50S ribosomal subunit. Forms a cluster with proteins L3 and L19. In the 70S ribosome, L14 and L19 interact and together make contacts with the 16S rRNA in bridges B5 and B8.

Functionally, binds to 23S rRNA. Forms part of two intersubunit bridges in the 70S ribosome. The chain is Large ribosomal subunit protein uL14 from Sorangium cellulosum (strain So ce56) (Polyangium cellulosum (strain So ce56)).